A 184-amino-acid chain; its full sequence is MSEREKITIENIVASTSLAEHLDLSRIALALDGSEYEPEQFPGLIYRLQEPKTAVLIFRSGKVNCTGAKNIEDVKRTIKIIIDKLKAADIEVYDDPQIIVQNIVAVYDLESELNLTDIAMSLGLENVEYEPEQFPGLVYRVEEPRVVLLLFGSGKVVCTGAKEESEIEQAVIKVKKELQKVGLI.

2 consecutive repeat copies span residues 9–85 (IENI…IDKL) and 100–178 (VQNI…KKEL).

Belongs to the TBP family.

Its function is as follows. General factor that plays a role in the activation of archaeal genes transcribed by RNA polymerase. Binds specifically to the TATA box promoter element which lies close to the position of transcription initiation. The polypeptide is TATA-box-binding protein (tbp) (Thermoplasma acidophilum (strain ATCC 25905 / DSM 1728 / JCM 9062 / NBRC 15155 / AMRC-C165)).